A 569-amino-acid polypeptide reads, in one-letter code: F-box-like/WD repeat-containing protein TBL1X (569 aa).

In terms of domain architecture, LisH spans 55-87 (TSDEVNFLVYRYLQESGFSHSAFTFGIESHISQ). The 46-residue stretch at 92 to 137 (GTLVPPAALISILQKGLQYVEAEISINEDGTVFDGRPIESLSLIDA) folds into the F-box-like domain. K153 is modified (N6-acetyllysine). The interval 170–195 (TSASVSQQNPSKNREATVNGEENRAH) is disordered. S175 is subject to Phosphoserine. WD repeat units lie at residues 222 to 261 (GHESEVFICAWNPVSDLLASGSGDSTARIWNLNENSNGGS), 278 to 317 (PSNKDVTSLDWNTNGTLLATGSYDGFARIWTEDGNLASTL), 319 to 358 (QHKGPIFALKWNRKGNYILSAGVDKTTIIWDAHTGEAKQQ), 361 to 401 (FHSA…KTFQ), 402 to 441 (GHTNEVNAIKWDPSGMLLASCSDDMTLKIWSMKQEVCIHD), 444 to 492 (AHNK…CTHT), 495 to 534 (KHQEPVYSVAFSPDGRYLASGSFDKCVHIWNTQSGNLVHS), and 536 to 568 (RGTGGIFEVCWNARGDKVGASASDGSVCVLDLR). K332 participates in a covalent cross-link: Glycyl lysine isopeptide (Lys-Gly) (interchain with G-Cter in SUMO2).

It belongs to the WD repeat EBI family. In terms of assembly, homotetramer; dimer of dimers. Component of the N-Cor repressor complex, at least composed of NCOR1, NCOR2, HDAC3, TBL1X, TBL1R, CORO2A and GPS2. Interacts with GPS2 (when sumoylated); leading to protect GPS2 against degradation by the proteasome. Component of a E3 ubiquitin ligase complex containing UBE2D1, SIAH1, CACYBP/SIP, SKP1, APC and TBL1X. Probably part of other corepressor complexes, that do not contain NCOR1 and NCOR2. Interacts with histones H2B, H3a and H4. Interacts with MECP2; recruits TBL1X to the heterochromatin foci. Interacts with USP44.

The protein localises to the nucleus. In terms of biological role, F-box-like protein involved in the recruitment of the ubiquitin/19S proteasome complex to nuclear receptor-regulated transcription units. Plays an essential role in transcription activation mediated by nuclear receptors. Probably acts as integral component of corepressor complexes that mediates the recruitment of the 19S proteasome complex, leading to the subsequent proteasomal degradation of transcription repressor complexes, thereby allowing cofactor exchange. This Macaca fascicularis (Crab-eating macaque) protein is F-box-like/WD repeat-containing protein TBL1X (TBL1X).